The chain runs to 206 residues: Imidazoleglycerol-phosphate dehydratase (206 aa).

Belongs to the imidazoleglycerol-phosphate dehydratase family.

It localises to the cytoplasm. It carries out the reaction D-erythro-1-(imidazol-4-yl)glycerol 3-phosphate = 3-(imidazol-4-yl)-2-oxopropyl phosphate + H2O. It functions in the pathway amino-acid biosynthesis; L-histidine biosynthesis; L-histidine from 5-phospho-alpha-D-ribose 1-diphosphate: step 6/9. This Cutibacterium acnes (strain DSM 16379 / KPA171202) (Propionibacterium acnes) protein is Imidazoleglycerol-phosphate dehydratase.